The following is a 64-amino-acid chain: Beta-defensin 1 (64 aa).

A signal peptide spans 1-22; that stretch reads MRLHHLLLVLFFVVLSAGSGFT. 3 cysteine pairs are disulfide-bonded: Cys-31/Cys-60, Cys-38/Cys-53, and Cys-43/Cys-61.

It belongs to the beta-defensin family. Monomer. Homodimer.

It is found in the secreted. Its subcellular location is the membrane. In terms of biological role, has bactericidal activity. May act as a ligand for C-C chemokine receptor CCR6. Positively regulates the sperm motility and bactericidal activity in a CCR6-dependent manner. Binds to CCR6 and triggers Ca2+ mobilization in the sperm which is important for its motility. The protein is Beta-defensin 1 (DEFB1) of Ovis aries (Sheep).